Reading from the N-terminus, the 457-residue chain is MAISSRSVGMTEIHCNFPQNPFRRISRRISQFRAGFPDKKPAAGACEEQDELTSGSAARIQRRDKQLPEIIGSDRELMSKLTTLGRPYRHFPFMGNRHVETIFASFFRSWPVIKSRRECLRMEDGGTVELDWPLEGEDAELWNGELPVNSPVLILLPGLTGGSDDSYVKHMLLRARKHGWHSVVFNSRGCADSPVTTPQFYSASFTKDLCQVVKHVAVRFSESNIYAVGWSLGANILVRYLGEVAGNCPLSGAVSLCNPFNLVIADEDFHKGLGFNNVYDKALARGLRQIFPKHTRLFEGIEGEYNIPTVAKARSVRDFDGGLTRVSFGFQSVGDYYSNSSSSLSIKYVQTSLLCIQASNDPIAPSRGIPWEDIKENPNCLLVVTPNGGHLGWVAGDDAPFGAPWTDPLVMEYLEVLEKNQIEKPLRRTIDDVHTPRVDSVHTRETNNYKSPIENVN.

Residues 39-59 (KKPAAGACEEQDELTSGSAAR) form a disordered region. The AB hydrolase-1 domain occupies 151–391 (PVLILLPGLT…LVVTPNGGHL (241 aa)). Catalysis depends on charge relay system residues Ser-231, Asp-361, and His-390. A compositionally biased stretch (basic and acidic residues) spans 438-447 (VDSVHTRETN). The segment at 438 to 457 (VDSVHTRETNNYKSPIENVN) is disordered. A compositionally biased stretch (polar residues) spans 448 to 457 (NYKSPIENVN).

This sequence belongs to the AB hydrolase superfamily. AB hydrolase 4 family.

The protein is Embryogenesis-associated protein EMB8 (EMB8) of Picea glauca (White spruce).